The chain runs to 222 residues: UPF0502 protein XAC4278 (222 aa).

The protein belongs to the UPF0502 family.

This Xanthomonas axonopodis pv. citri (strain 306) protein is UPF0502 protein XAC4278.